The sequence spans 366 residues: MSGNTLGTLFCVTNFGESHGPAIGCVIDGCPPGMELSEADIQADLDRRRPGTSRHVTQRNEPDAVEILSGVYEGKTTGTPIALLIRNTDQRSKDYGNIAQSFRPGHADYAYWHKYGLRDPRGGGRSSARLTAPTVAAGAVAKKWLAEKYGTRFRACMTQLGELPIPFESWEHVPHNPFFAPVADVQAYEDYMDALRKSGDSCGARIRVQATGVPVGLGDPLYDKLDADIAHVMMGLNAVKGVEIGAGFASVAQRGTTHGDSLTPTGFASNNAGGVLGGISTGQDIEVSLAIKPTSSIISPRESIDIHGQSTEVITKGRHDPCVGIRAAPIAEALLALVIMDHALRHRAQCGDVVQAVAPIPAVRLG.

NADP(+)-binding residues include arginine 48 and arginine 54. FMN-binding positions include 125–127 (RSS), 237–238 (NA), glycine 277, 292–296 (KPTSS), and arginine 318.

Belongs to the chorismate synthase family. In terms of assembly, homotetramer. It depends on FMNH2 as a cofactor.

It carries out the reaction 5-O-(1-carboxyvinyl)-3-phosphoshikimate = chorismate + phosphate. The protein operates within metabolic intermediate biosynthesis; chorismate biosynthesis; chorismate from D-erythrose 4-phosphate and phosphoenolpyruvate: step 7/7. Catalyzes the anti-1,4-elimination of the C-3 phosphate and the C-6 proR hydrogen from 5-enolpyruvylshikimate-3-phosphate (EPSP) to yield chorismate, which is the branch point compound that serves as the starting substrate for the three terminal pathways of aromatic amino acid biosynthesis. This reaction introduces a second double bond into the aromatic ring system. In Acidovorax sp. (strain JS42), this protein is Chorismate synthase.